Reading from the N-terminus, the 316-residue chain is Beta-ketoacyl-[acyl-carrier-protein] synthase III (316 aa).

Residues cysteine 112 and histidine 243 contribute to the active site. Residues 244-248 (QANLR) are ACP-binding. Residue asparagine 273 is part of the active site.

This sequence belongs to the thiolase-like superfamily. FabH family. Homodimer.

The protein resides in the cytoplasm. The catalysed reaction is malonyl-[ACP] + acetyl-CoA + H(+) = 3-oxobutanoyl-[ACP] + CO2 + CoA. The protein operates within lipid metabolism; fatty acid biosynthesis. Catalyzes the condensation reaction of fatty acid synthesis by the addition to an acyl acceptor of two carbons from malonyl-ACP. Catalyzes the first condensation reaction which initiates fatty acid synthesis and may therefore play a role in governing the total rate of fatty acid production. Possesses both acetoacetyl-ACP synthase and acetyl transacylase activities. Its substrate specificity determines the biosynthesis of branched-chain and/or straight-chain of fatty acids. The chain is Beta-ketoacyl-[acyl-carrier-protein] synthase III from Histophilus somni (strain 129Pt) (Haemophilus somnus).